Consider the following 579-residue polypeptide: Isocitrate dehydrogenase kinase/phosphatase (579 aa).

ATP contacts are provided by residues 324-330 (ADGTPGM) and Lys345. Residue Asp380 is part of the active site.

The protein belongs to the AceK family.

Its subcellular location is the cytoplasm. It catalyses the reaction L-seryl-[isocitrate dehydrogenase] + ATP = O-phospho-L-seryl-[isocitrate dehydrogenase] + ADP + H(+). In terms of biological role, bifunctional enzyme which can phosphorylate or dephosphorylate isocitrate dehydrogenase (IDH) on a specific serine residue. This is a regulatory mechanism which enables bacteria to bypass the Krebs cycle via the glyoxylate shunt in response to the source of carbon. When bacteria are grown on glucose, IDH is fully active and unphosphorylated, but when grown on acetate or ethanol, the activity of IDH declines drastically concomitant with its phosphorylation. The chain is Isocitrate dehydrogenase kinase/phosphatase from Xanthomonas axonopodis pv. citri (strain 306).